Here is a 28-residue protein sequence, read N- to C-terminus: Potassium channel toxin alpha-KTx 9.5 (28 aa).

Intrachain disulfides connect Cys-3–Cys-19, Cys-6–Cys-24, and Cys-10–Cys-26. The residue at position 28 (Val-28) is a Valine amide.

In terms of tissue distribution, expressed by the venom gland.

The protein localises to the secreted. Its function is as follows. Blocks voltage-gated potassium channels Kv1.1/KCNA1 (IC(50)=145 nM), Kv1.2/KCNA2 (IC(50)=2.5 nM), and Kv1.3/KCNA3 (IC(50)=15). Also inhibits calcium-activated potassium channels (KCa/KCNN). The protein is Potassium channel toxin alpha-KTx 9.5 of Buthus occitanus tunetanus (Common European scorpion).